Here is a 389-residue protein sequence, read N- to C-terminus: Sedoheptulose-1,7-bisphosphatase, chloroplastic (389 aa).

A disulfide bridge links cysteine 115 with cysteine 120. Positions 126, 155, 173, 175, and 176 each coordinate Mg(2+). Substrate contacts are provided by residues 176–179, tyrosine 287, and lysine 317; that span reads DGSS. Mg(2+) is bound at residue glutamate 323.

This sequence belongs to the FBPase class 1 family. As to quaternary structure, homodimer. Mg(2+) serves as cofactor.

The protein resides in the plastid. The protein localises to the chloroplast. It catalyses the reaction D-sedoheptulose 1,7-bisphosphate + H2O = D-sedoheptulose 7-phosphate + phosphate. The protein operates within carbohydrate biosynthesis; Calvin cycle. This is Sedoheptulose-1,7-bisphosphatase, chloroplastic (CSBP) from Chlamydomonas reinhardtii (Chlamydomonas smithii).